The following is a 461-amino-acid chain: MADVKIGFEVHVQLDTRTKLFCDCPTDYEDAEPNENTCPVCTGMPGAKPLPPNEEALLIALEIAHMLDCEPVLDRPLYFQRKHYDYPDLPSGYQRTSVPIAVNGELDGVRIREIHVEEDPGRWEPSTGRVDYNRSGVPLIEIVTEPDMRSPEEARDFLRRLMQVLRYSGKVKGDGGIRVDANVSVEGGARVEIKNINSIKGVYRALRFEIQRQLNLMKHGREVRRETRAFREDQGTTVAMRSKETAEDYRYIPDPDIPVFEITEDLWEKAVARAPEPPHHRARRMAEEYGISLEAAEALVTEREWADFFEEVVEKAPDDWDIEFIDQWVRKEIKKILNKKEMTFREAKITPEEFIELLELVREDKITRQNALNALWEAVDSDKSPVEIIEENGLLKVSDEDRLARVVEEVIEENPQAVEDYKSGKEEAIHYLMGQVMRKTRGQADPEVTMRLLRERLDSDG.

This sequence belongs to the GatB/GatE family. GatB subfamily. In terms of assembly, heterotrimer of A, B and C subunits.

It carries out the reaction L-glutamyl-tRNA(Gln) + L-glutamine + ATP + H2O = L-glutaminyl-tRNA(Gln) + L-glutamate + ADP + phosphate + H(+). It catalyses the reaction L-aspartyl-tRNA(Asn) + L-glutamine + ATP + H2O = L-asparaginyl-tRNA(Asn) + L-glutamate + ADP + phosphate + 2 H(+). In terms of biological role, allows the formation of correctly charged Asn-tRNA(Asn) or Gln-tRNA(Gln) through the transamidation of misacylated Asp-tRNA(Asn) or Glu-tRNA(Gln) in organisms which lack either or both of asparaginyl-tRNA or glutaminyl-tRNA synthetases. The reaction takes place in the presence of glutamine and ATP through an activated phospho-Asp-tRNA(Asn) or phospho-Glu-tRNA(Gln). The protein is Aspartyl/glutamyl-tRNA(Asn/Gln) amidotransferase subunit B of Methanopyrus kandleri (strain AV19 / DSM 6324 / JCM 9639 / NBRC 100938).